The primary structure comprises 388 residues: Succinate--CoA ligase [ADP-forming] subunit beta (388 aa).

The ATP-grasp domain occupies K9 to Q244. ATP is bound by residues K46, G53–G55, E99, C102, and E107. Residues N199 and D213 each coordinate Mg(2+). Substrate-binding positions include N264 and G321–M323.

The protein belongs to the succinate/malate CoA ligase beta subunit family. Heterotetramer of two alpha and two beta subunits. It depends on Mg(2+) as a cofactor.

The catalysed reaction is succinate + ATP + CoA = succinyl-CoA + ADP + phosphate. It catalyses the reaction GTP + succinate + CoA = succinyl-CoA + GDP + phosphate. It functions in the pathway carbohydrate metabolism; tricarboxylic acid cycle; succinate from succinyl-CoA (ligase route): step 1/1. Functionally, succinyl-CoA synthetase functions in the citric acid cycle (TCA), coupling the hydrolysis of succinyl-CoA to the synthesis of either ATP or GTP and thus represents the only step of substrate-level phosphorylation in the TCA. The beta subunit provides nucleotide specificity of the enzyme and binds the substrate succinate, while the binding sites for coenzyme A and phosphate are found in the alpha subunit. The protein is Succinate--CoA ligase [ADP-forming] subunit beta of Anaeromyxobacter dehalogenans (strain 2CP-C).